Here is a 459-residue protein sequence, read N- to C-terminus: Ribulose bisphosphate carboxylase (459 aa).

A substrate-binding site is contributed by Asn111. The active-site Proton acceptor is the Lys166. Lys168 is a binding site for substrate. Residues Lys191, Asp193, and Glu194 each coordinate Mg(2+). Lys191 is modified (N6-carboxylysine). The Proton acceptor role is filled by His287. Residues Arg288, His321, and Ser368 each contribute to the substrate site.

Belongs to the RuBisCO large chain family. Type II subfamily. In terms of assembly, the complex is approximately 350 kDa when isolated from either T.denitrificans or R.sphaeroides, suggesting a homohexamer or homooctamer structure. Mg(2+) is required as a cofactor.

The catalysed reaction is 2 (2R)-3-phosphoglycerate + 2 H(+) = D-ribulose 1,5-bisphosphate + CO2 + H2O. The enzyme catalyses D-ribulose 1,5-bisphosphate + O2 = 2-phosphoglycolate + (2R)-3-phosphoglycerate + 2 H(+). RuBisCO catalyzes two reactions: the carboxylation of D-ribulose 1,5-bisphosphate, the primary event in carbon dioxide fixation, as well as the oxidative fragmentation of the pentose substrate. Both reactions occur simultaneously and in competition at the same active site. The polypeptide is Ribulose bisphosphate carboxylase (cbbM) (Thiobacillus denitrificans (strain ATCC 25259 / T1)).